The chain runs to 359 residues: S-adenosylmethionine:tRNA ribosyltransferase-isomerase (359 aa).

It belongs to the QueA family. Monomer.

The protein resides in the cytoplasm. The catalysed reaction is 7-aminomethyl-7-carbaguanosine(34) in tRNA + S-adenosyl-L-methionine = epoxyqueuosine(34) in tRNA + adenine + L-methionine + 2 H(+). It functions in the pathway tRNA modification; tRNA-queuosine biosynthesis. Functionally, transfers and isomerizes the ribose moiety from AdoMet to the 7-aminomethyl group of 7-deazaguanine (preQ1-tRNA) to give epoxyqueuosine (oQ-tRNA). This is S-adenosylmethionine:tRNA ribosyltransferase-isomerase from Synechococcus sp. (strain ATCC 27144 / PCC 6301 / SAUG 1402/1) (Anacystis nidulans).